A 317-amino-acid polypeptide reads, in one-letter code: tRNA pseudouridine synthase B (317 aa).

Aspartate 47 acts as the Nucleophile in catalysis.

The protein belongs to the pseudouridine synthase TruB family. Type 1 subfamily.

The enzyme catalyses uridine(55) in tRNA = pseudouridine(55) in tRNA. In terms of biological role, responsible for synthesis of pseudouridine from uracil-55 in the psi GC loop of transfer RNAs. The chain is tRNA pseudouridine synthase B from Shewanella frigidimarina (strain NCIMB 400).